A 157-amino-acid chain; its full sequence is Transcriptional repressor NrdR (157 aa).

A zinc finger lies at 3–34 (CPSCQNTDSRVLESRSADAGKCVRRRRECLNC). The 91-residue stretch at 49 to 139 (VTVIKRSNAK…VYRQFNGIED (91 aa)) folds into the ATP-cone domain.

The protein belongs to the NrdR family. It depends on Zn(2+) as a cofactor.

Its function is as follows. Negatively regulates transcription of bacterial ribonucleotide reductase nrd genes and operons by binding to NrdR-boxes. This Prochlorococcus marinus (strain SARG / CCMP1375 / SS120) protein is Transcriptional repressor NrdR.